A 358-amino-acid polypeptide reads, in one-letter code: 3-dehydroquinate synthase (358 aa).

Residues 70–75 (DGEQFK), 104–108 (GVIGD), 128–129 (TT), K141, K150, and 168–171 (CLHT) each bind NAD(+). Residues E183, H246, and H263 each coordinate Zn(2+).

It belongs to the sugar phosphate cyclases superfamily. Dehydroquinate synthase family. Co(2+) is required as a cofactor. The cofactor is Zn(2+). It depends on NAD(+) as a cofactor.

It is found in the cytoplasm. The enzyme catalyses 7-phospho-2-dehydro-3-deoxy-D-arabino-heptonate = 3-dehydroquinate + phosphate. It functions in the pathway metabolic intermediate biosynthesis; chorismate biosynthesis; chorismate from D-erythrose 4-phosphate and phosphoenolpyruvate: step 2/7. Its function is as follows. Catalyzes the conversion of 3-deoxy-D-arabino-heptulosonate 7-phosphate (DAHP) to dehydroquinate (DHQ). The sequence is that of 3-dehydroquinate synthase from Shewanella baltica (strain OS195).